The sequence spans 911 residues: Protein translocase subunit SecA (911 aa).

Residues glutamine 87, 105 to 109 (GEGKT), and aspartate 499 each bind ATP. Positions 895, 897, 906, and 907 each coordinate Zn(2+).

It belongs to the SecA family. As to quaternary structure, monomer and homodimer. Part of the essential Sec protein translocation apparatus which comprises SecA, SecYEG and auxiliary proteins SecDF-YajC and YidC. Requires Zn(2+) as cofactor.

The protein localises to the cell inner membrane. The protein resides in the cytoplasm. The enzyme catalyses ATP + H2O + cellular proteinSide 1 = ADP + phosphate + cellular proteinSide 2.. Functionally, part of the Sec protein translocase complex. Interacts with the SecYEG preprotein conducting channel. Has a central role in coupling the hydrolysis of ATP to the transfer of proteins into and across the cell membrane, serving both as a receptor for the preprotein-SecB complex and as an ATP-driven molecular motor driving the stepwise translocation of polypeptide chains across the membrane. This chain is Protein translocase subunit SecA, found in Novosphingobium aromaticivorans (strain ATCC 700278 / DSM 12444 / CCUG 56034 / CIP 105152 / NBRC 16084 / F199).